A 333-amino-acid polypeptide reads, in one-letter code: 5-formaminoimidazole-4-carboxamide-1-(beta)-D-ribofuranosyl 5'-monophosphate synthetase (333 aa).

Positions 10 and 70 each coordinate 5-amino-1-(5-phospho-beta-D-ribosyl)imidazole-4-carboxamide. One can recognise an ATP-grasp domain in the interval 91–324 (KEVLKWESDR…IAREIKIAIE (234 aa)). Residues 121-181 (PDDI…VPIY) and Glu-203 contribute to the ATP site. 5-amino-1-(5-phospho-beta-D-ribosyl)imidazole-4-carboxamide is bound at residue Asn-231. Positions 269 and 282 each coordinate Mg(2+).

This sequence belongs to the phosphohexose mutase family. It depends on Mg(2+) as a cofactor. Mn(2+) is required as a cofactor.

The enzyme catalyses 5-amino-1-(5-phospho-beta-D-ribosyl)imidazole-4-carboxamide + formate + ATP = 5-formamido-1-(5-phospho-D-ribosyl)imidazole-4-carboxamide + ADP + phosphate. It functions in the pathway purine metabolism; IMP biosynthesis via de novo pathway; 5-formamido-1-(5-phospho-D-ribosyl)imidazole-4-carboxamide from 5-amino-1-(5-phospho-D-ribosyl)imidazole-4-carboxamide (formate route): step 1/1. Catalyzes the ATP- and formate-dependent formylation of 5-aminoimidazole-4-carboxamide-1-beta-d-ribofuranosyl 5'-monophosphate (AICAR) to 5-formaminoimidazole-4-carboxamide-1-beta-d-ribofuranosyl 5'-monophosphate (FAICAR) in the absence of folates. This is 5-formaminoimidazole-4-carboxamide-1-(beta)-D-ribofuranosyl 5'-monophosphate synthetase from Pyrococcus horikoshii (strain ATCC 700860 / DSM 12428 / JCM 9974 / NBRC 100139 / OT-3).